The primary structure comprises 348 residues: Propane 2-monooxygenase, reductase component (348 aa).

In terms of domain architecture, 2Fe-2S ferredoxin-type spans 5–95 (HKINFDPVDI…DCTIELLNFD (91 aa)). 4 residues coordinate [2Fe-2S] cluster: C39, C44, C47, and C79. The FAD-binding FR-type domain maps to 105-206 (IQDVRTQVQA…TGPYGSFTLK (102 aa)).

This sequence belongs to the bacterial ring-hydroxylating dioxygenase ferredoxin reductase family. The propane 2-monooxygenase multicomponent enzyme system is composed of an electron transfer component and a monooxygenase component interacting with the effector protein MimD. The electron transfer component is composed of a reductase (MimB), and the monooxygenase component is formed by a large subunit (MimA) and a small subunit (MimC). It depends on FAD as a cofactor. [2Fe-2S] cluster serves as cofactor.

Its function is as follows. Reductase component of the propane 2-monooxygenase multicomponent enzyme system which is involved in the degradation of propane via the O2-dependent hydroxylation of propane. Reductase catalyzes the transfer of electrons from NADH or NADPH to monooxygenase. This Mycolicibacterium smegmatis (strain ATCC 700084 / mc(2)155) (Mycobacterium smegmatis) protein is Propane 2-monooxygenase, reductase component.